Here is a 242-residue protein sequence, read N- to C-terminus: ATP synthase subunit a (242 aa).

6 helical membrane-spanning segments follow: residues 31–51 (IYML…FYNW), 84–104 (FIPL…LGMT), 114–134 (IIVT…VGFV), 140–160 (FLTL…MIVI), 189–209 (VIAS…IPLM), and 210–230 (VILI…FTIL).

Belongs to the ATPase A chain family. In terms of assembly, F-type ATPases have 2 components, CF(1) - the catalytic core - and CF(0) - the membrane proton channel. CF(1) has five subunits: alpha(3), beta(3), gamma(1), delta(1), epsilon(1). CF(0) has three main subunits: a(1), b(2) and c(9-12). The alpha and beta chains form an alternating ring which encloses part of the gamma chain. CF(1) is attached to CF(0) by a central stalk formed by the gamma and epsilon chains, while a peripheral stalk is formed by the delta and b chains.

It localises to the cell inner membrane. Its function is as follows. Key component of the proton channel; it plays a direct role in the translocation of protons across the membrane. This is ATP synthase subunit a from Rickettsia canadensis (strain McKiel).